A 223-amino-acid polypeptide reads, in one-letter code: MADLVPVLTIDGPSGVGKGTVSKIVAARLGWHYLDSGALYRAVAVAADWTAVDVSDTTALVKCAFDTCVNFAKCADGEMRVLVNAIDATDVLRMETTGVLASTIAAISEVRAALKERQQMFRRTPGLVADGRDMGTVIFPDAQYKVFLTAKAEERAQRRYKQLMKKGVSVMLGALLEEIRARDARDACRSVAPLKPADDALLIDSTCMEVDEVVAQVLALVTD.

Residue 12 to 20 participates in ATP binding; sequence GPSGVGKGT.

It belongs to the cytidylate kinase family. Type 1 subfamily.

It localises to the cytoplasm. The catalysed reaction is CMP + ATP = CDP + ADP. The enzyme catalyses dCMP + ATP = dCDP + ADP. This is Cytidylate kinase from Xylella fastidiosa (strain 9a5c).